The following is a 483-amino-acid chain: ATP-dependent RNA helicase DDX25 (483 aa).

Residues 97–125 (KSFEELHLKNELLRGIYAMGFNRPSKIQE) carry the Q motif motif. The region spanning 130–300 (MMLADPPQNL…ERIVPDPNII (171 aa)) is the Helicase ATP-binding domain. Position 143–150 (143–150 (SQSGTGKT)) interacts with ATP. Residues 247–250 (DEAD) carry the DEAD box motif. Positions 311–478 (NIQQFYDQCE…KLNSMDMDEM (168 aa)) constitute a Helicase C-terminal domain.

Belongs to the DEAD box helicase family. In terms of tissue distribution, an mRNA component of germ plasm. Localizes to the granulo-fibrillar material (GFM) of the mitochondrial cloud in stage I oocytes. Associated, at a low level, with the periphery of mature germinal granules in later stage oocytes. Localizes to the vegetal cortex in stage II oocytes and segregates with germ plasm during early embryogenesis. In adults, expression is restricted to the ovary and, at a lower level, to spermatogonia, spermatocytes and spermatids of the testis.

It localises to the cytoplasm. It is found in the nucleus. It catalyses the reaction ATP + H2O = ADP + phosphate + H(+). In terms of biological role, ATP-dependent RNA helicase. The polypeptide is ATP-dependent RNA helicase DDX25 (Xenopus laevis (African clawed frog)).